A 263-amino-acid chain; its full sequence is Phosphatidylglycerol--prolipoprotein diacylglyceryl transferase (263 aa).

Helical transmembrane passes span 7 to 27, 50 to 70, 85 to 105, and 112 to 132; these read IFSI…LGIV, LLTA…VLIY, TWKG…AVII, and IPIF…LFLG. Arg133 lines the a 1,2-diacyl-sn-glycero-3-phospho-(1'-sn-glycerol) pocket. The next 3 membrane-spanning stretches (helical) occupy residues 169–189, 197–217, and 233–253; these read LYEA…LFFL, GTLT…VEFF, and MGQL…LSAL.

It belongs to the Lgt family.

Its subcellular location is the cell membrane. The catalysed reaction is L-cysteinyl-[prolipoprotein] + a 1,2-diacyl-sn-glycero-3-phospho-(1'-sn-glycerol) = an S-1,2-diacyl-sn-glyceryl-L-cysteinyl-[prolipoprotein] + sn-glycerol 1-phosphate + H(+). It functions in the pathway protein modification; lipoprotein biosynthesis (diacylglyceryl transfer). Its function is as follows. Catalyzes the transfer of the diacylglyceryl group from phosphatidylglycerol to the sulfhydryl group of the N-terminal cysteine of a prolipoprotein, the first step in the formation of mature lipoproteins. This chain is Phosphatidylglycerol--prolipoprotein diacylglyceryl transferase, found in Wolbachia sp. subsp. Brugia malayi (strain TRS).